A 177-amino-acid polypeptide reads, in one-letter code: MGIQSSWFYSSKHQSAKREGMVKEGKGGIVSELIYSNNQYSDNQYSDNQAVINRILLPLLRQSGNEARWLLWVSPHKKLSRQWLINSGLPLDKIIQLNRMSSITTVEAMERALASGNYSVVLGWLPTLSGKDTVRLQAAAQKGNALGFIMRPQDVSKETSRAESRSDLLKIHSIHYH.

A ftsZ binding region spans residues 112-118; sequence ALASGNY. Residues 170-177 form a lon protease binding region; the sequence is KIHSIHYH.

The protein belongs to the SulA family. In terms of assembly, interacts with FtsZ. Is rapidly cleaved and degraded by the Lon protease once DNA damage is repaired.

Functionally, component of the SOS system and an inhibitor of cell division. Accumulation of SulA causes rapid cessation of cell division and the appearance of long, non-septate filaments. In the presence of GTP, binds a polymerization-competent form of FtsZ in a 1:1 ratio, thus inhibiting FtsZ polymerization and therefore preventing it from participating in the assembly of the Z ring. This mechanism prevents the premature segregation of damaged DNA to daughter cells during cell division. The polypeptide is Cell division inhibitor SulA (Photorhabdus laumondii subsp. laumondii (strain DSM 15139 / CIP 105565 / TT01) (Photorhabdus luminescens subsp. laumondii)).